The primary structure comprises 42 residues: Photosystem II reaction center protein J (42 aa).

Residues 10-30 (IPLWLVLTIIGLAAIALLALF) form a helical membrane-spanning segment.

Belongs to the PsbJ family. As to quaternary structure, PSII is composed of 1 copy each of membrane proteins PsbA, PsbB, PsbC, PsbD, PsbE, PsbF, PsbH, PsbI, PsbJ, PsbK, PsbL, PsbM, PsbT, PsbY, PsbZ, Psb30/Ycf12, at least 3 peripheral proteins of the oxygen-evolving complex and a large number of cofactors. It forms dimeric complexes.

The protein localises to the plastid. It is found in the chloroplast thylakoid membrane. In terms of biological role, this protein is a component of the reaction center of photosystem II. One of the components of the core complex of photosystem II (PSII). PSII is a light-driven water:plastoquinone oxidoreductase that uses light energy to abstract electrons from H(2)O, generating O(2) and a proton gradient subsequently used for ATP formation. It consists of a core antenna complex that captures photons, and an electron transfer chain that converts photonic excitation into a charge separation. The sequence is that of Photosystem II reaction center protein J from Euglena gracilis.